The following is a 68-amino-acid chain: Conotoxin Vx2 (68 aa).

An N-terminal signal peptide occupies residues Met-1–Ala-20. The propeptide occupies Leu-21–Ala-47. Cystine bridges form between Cys-55–Cys-68, Cys-56–Cys-61, and Cys-57–Cys-65.

Belongs to the conotoxin M superfamily. As to expression, expressed by the venom duct.

It localises to the secreted. Its function is as follows. In vivo, elicits a series of symptoms, such as being sedative, tail stiffening and twisted jumping, when injected intracranially into mice. This Conus vexillum (Flag cone) protein is Conotoxin Vx2.